A 182-amino-acid chain; its full sequence is Translation initiation factor IF-3, chloroplastic (182 aa).

Belongs to the IF-3 family. As to quaternary structure, monomer.

It is found in the plastid. It localises to the chloroplast. IF-3 binds to the 30S ribosomal subunit and shifts the equilibrium between 70S ribosomes and their 50S and 30S subunits in favor of the free subunits, thus enhancing the availability of 30S subunits on which protein synthesis initiation begins. This is Translation initiation factor IF-3, chloroplastic from Porphyra purpurea (Red seaweed).